Consider the following 724-residue polypeptide: Catalase-peroxidase (724 aa).

Positions tryptophan 98–tyrosine 226 form a cross-link, tryptophyl-tyrosyl-methioninium (Trp-Tyr) (with M-252). Histidine 99 acts as the Proton acceptor in catalysis. A cross-link (tryptophyl-tyrosyl-methioninium (Tyr-Met) (with W-98)) is located at residues tyrosine 226 to methionine 252. Histidine 267 is a heme b binding site.

It belongs to the peroxidase family. Peroxidase/catalase subfamily. In terms of assembly, homodimer or homotetramer. Heme b serves as cofactor. In terms of processing, formation of the three residue Trp-Tyr-Met cross-link is important for the catalase, but not the peroxidase activity of the enzyme.

It catalyses the reaction H2O2 + AH2 = A + 2 H2O. It carries out the reaction 2 H2O2 = O2 + 2 H2O. Its function is as follows. Bifunctional enzyme with both catalase and broad-spectrum peroxidase activity. This chain is Catalase-peroxidase, found in Cereibacter sphaeroides (strain ATCC 17025 / ATH 2.4.3) (Rhodobacter sphaeroides).